The chain runs to 124 residues: Small ribosomal subunit protein uS12 (124 aa).

Residues 1-22 (MATVNQLVRKPRKRKVAKSDVP) form a disordered region. A 3-methylthioaspartic acid modification is found at Asp89. The interval 99–124 (RGSLDTSGVQNRKQGRSKYGTKRPKK) is disordered. Residues 111-124 (KQGRSKYGTKRPKK) are compositionally biased toward basic residues.

Belongs to the universal ribosomal protein uS12 family. In terms of assembly, part of the 30S ribosomal subunit. Contacts proteins S8 and S17. May interact with IF1 in the 30S initiation complex.

With S4 and S5 plays an important role in translational accuracy. Functionally, interacts with and stabilizes bases of the 16S rRNA that are involved in tRNA selection in the A site and with the mRNA backbone. Located at the interface of the 30S and 50S subunits, it traverses the body of the 30S subunit contacting proteins on the other side and probably holding the rRNA structure together. The combined cluster of proteins S8, S12 and S17 appears to hold together the shoulder and platform of the 30S subunit. The chain is Small ribosomal subunit protein uS12 from Marinomonas sp. (strain MWYL1).